A 562-amino-acid chain; its full sequence is Urease subunit alpha (562 aa).

One can recognise a Urease domain in the interval 131–562 (GGMDCHIHFI…LPMAQRYFLF (432 aa)). 3 residues coordinate Ni(2+): His136, His138, and Lys219. Residue Lys219 is modified to N6-carboxylysine. Residue His221 coordinates substrate. Ni(2+) contacts are provided by His248 and His274. Catalysis depends on His322, which acts as the Proton donor. Asp362 contacts Ni(2+).

Belongs to the metallo-dependent hydrolases superfamily. Urease alpha subunit family. Heterotrimer of UreA (gamma), UreB (beta) and UreC (alpha) subunits. Three heterotrimers associate to form the active enzyme. Ni cation serves as cofactor. In terms of processing, carboxylation allows a single lysine to coordinate two nickel ions.

It localises to the cytoplasm. It catalyses the reaction urea + 2 H2O + H(+) = hydrogencarbonate + 2 NH4(+). It functions in the pathway nitrogen metabolism; urea degradation; CO(2) and NH(3) from urea (urease route): step 1/1. This chain is Urease subunit alpha, found in Paracoccus denitrificans (strain Pd 1222).